The primary structure comprises 181 residues: Putative manganese efflux pump MntP (181 aa).

5 helical membrane passes run 35 to 55 (IIFG…GSIA), 59 to 79 (VADW…LLMI), 102 to 122 (AATG…LAFI), 126 to 146 (ILIT…LGVM), and 161 to 181 (ILGG…HLTM).

Belongs to the MntP (TC 9.B.29) family.

Its subcellular location is the cell inner membrane. Functionally, probably functions as a manganese efflux pump. The chain is Putative manganese efflux pump MntP from Nitrosomonas eutropha (strain DSM 101675 / C91 / Nm57).